The sequence spans 380 residues: Lipid-A-disaccharide synthase (380 aa).

This sequence belongs to the LpxB family.

The catalysed reaction is a lipid X + a UDP-2-N,3-O-bis[(3R)-3-hydroxyacyl]-alpha-D-glucosamine = a lipid A disaccharide + UDP + H(+). Its pathway is bacterial outer membrane biogenesis; LPS lipid A biosynthesis. Condensation of UDP-2,3-diacylglucosamine and 2,3-diacylglucosamine-1-phosphate to form lipid A disaccharide, a precursor of lipid A, a phosphorylated glycolipid that anchors the lipopolysaccharide to the outer membrane of the cell. This Photobacterium profundum (strain SS9) protein is Lipid-A-disaccharide synthase.